Reading from the N-terminus, the 174-residue chain is Phospholipase A2-like protein Y52B11A.8 (174 aa).

The N-terminal stretch at 1–18 is a signal peptide; the sequence is MRGLLVATWIFVSVAASA. Asn-49 and Asn-143 each carry an N-linked (GlcNAc...) asparagine glycan. The tract at residues 137–174 is disordered; it reads YEASGPNASTTEESPAEKDDYDYESHVAGLNATPSSST.

The protein belongs to the phospholipase A2 family.

It is found in the secreted. In Caenorhabditis elegans, this protein is Phospholipase A2-like protein Y52B11A.8.